The primary structure comprises 435 residues: AP-2 complex subunit mu (435 aa).

Ser45 is modified (phosphoserine). Thr156 is modified (phosphothreonine). The MHD domain maps to 170-434; that stretch reads RNELFLDVLE…IGRSGIYETR (265 aa). A 1,2-diacyl-sn-glycero-3-phospho-(1D-myo-inositol-3,4,5-trisphosphate) is bound by residues Lys341, Lys345, and Lys354.

It belongs to the adaptor complexes medium subunit family. In terms of assembly, adaptor protein complex 2 (AP-2) is a heterotetramer composed of two large adaptins (alpha-type subunit AP2A1 or AP2A2 and beta-type subunit AP2B1), a medium adaptin (mu-type subunit AP2M1) and a small adaptin (sigma-type subunit AP2S1). Interacts with ATP6V1H and MEGF10. Interacts with EGFR and TTGN1. Interacts with F2R. Interacts with PIP5K1C; tyrosine phosphorylation of PIP5K1C weakens the interaction. Interacts with KIAA0319; required for clathrin-mediated endocytosis of KIAA0319. Interacts with DVL2 (via DEP domain). Interacts with KCNQ1; mediates estrogen-induced internalization via clathrin-coated vesicles. Interacts with P2RX4 (via internalization motif). Together with AP2A1 or AP2A2 and AP2B1, it interacts with ADAM10; this interaction facilitates ADAM10 endocytosis from the plasma membrane during long-term potentiation in hippocampal neurons. Probably interacts with ACE2 (via endocytic sorting signal motif); the interaction is inhibited by ACE2 phosphorylation. Interacts with RALBP1; the interaction is direct. Interacts with TMEM106B (via N-terminus). In terms of processing, phosphorylation at Thr-156 increases the affinity of the AP-2 complex for cargo membrane proteins during the initial stages of endocytosis.

Its subcellular location is the cell membrane. It localises to the membrane. The protein resides in the coated pit. In terms of biological role, component of the adaptor protein complex 2 (AP-2). Adaptor protein complexes function in protein transport via transport vesicles in different membrane traffic pathways. Adaptor protein complexes are vesicle coat components and appear to be involved in cargo selection and vesicle formation. AP-2 is involved in clathrin-dependent endocytosis in which cargo proteins are incorporated into vesicles surrounded by clathrin (clathrin-coated vesicles, CCVs) which are destined for fusion with the early endosome. The clathrin lattice serves as a mechanical scaffold but is itself unable to bind directly to membrane components. Clathrin-associated adaptor protein (AP) complexes which can bind directly to both the clathrin lattice and to the lipid and protein components of membranes are considered to be the major clathrin adaptors contributing the CCV formation. AP-2 also serves as a cargo receptor to selectively sort the membrane proteins involved in receptor-mediated endocytosis. AP-2 seems to play a role in the recycling of synaptic vesicle membranes from the presynaptic surface. AP-2 recognizes Y-X-X-[FILMV] (Y-X-X-Phi) and [ED]-X-X-X-L-[LI] endocytosis signal motifs within the cytosolic tails of transmembrane cargo molecules. AP-2 may also play a role in maintaining normal post-endocytic trafficking through the ARF6-regulated, non-clathrin pathway. During long-term potentiation in hippocampal neurons, AP-2 is responsible for the endocytosis of ADAM10. The AP-2 mu subunit binds to transmembrane cargo proteins; it recognizes the Y-X-X-Phi motifs. The surface region interacting with to the Y-X-X-Phi motif is inaccessible in cytosolic AP-2, but becomes accessible through a conformational change following phosphorylation of AP-2 mu subunit at Thr-156 in membrane-associated AP-2. The membrane-specific phosphorylation event appears to involve assembled clathrin which activates the AP-2 mu kinase AAK1. Plays a role in endocytosis of frizzled family members upon Wnt signaling. The chain is AP-2 complex subunit mu (AP2M1) from Bos taurus (Bovine).